A 318-amino-acid polypeptide reads, in one-letter code: Ficolin-1-B (318 aa).

The N-terminal stretch at 1 to 19 (MTRWVQTFLLLVAVIRSYA) is a signal peptide. The Collagen-like domain occupies 42 to 99 (GCPGIPGVPGPQGPSGPAGAKGEKGFPGIPGKMGPTGLKGERGISGPKGQKGDKGDPG). Residues 100–318 (IPVVGMAQNC…VSEIKFRPQP (219 aa)) enclose the Fibrinogen C-terminal domain. An intrachain disulfide couples C109 to C137. N205 and N222 each carry an N-linked (GlcNAc...) asparagine glycan. D253 is a binding site for Ca(2+). Residue N254 is glycosylated (N-linked (GlcNAc...) asparagine). Positions 255 and 257 each coordinate Ca(2+). C261 and C274 form a disulfide bridge. 273–275 (SCH) provides a ligand contact to a carbohydrate. N287 carries N-linked (GlcNAc...) asparagine glycosylation.

It belongs to the ficolin lectin family. Homotrimer. May form higher-order oligomers. N-glycosylated. Expressed in peripheral blood leukocytes. Also detected at lower levels in spleen and lung.

It is found in the secreted. In terms of biological role, may function in innate immunity through activation of the lectin complement pathway. Binds to GalNAc and GlcNAc carbohydrate moieties. The sequence is that of Ficolin-1-B from Xenopus laevis (African clawed frog).